Here is a 417-residue protein sequence, read N- to C-terminus: Imidazolonepropionase (417 aa).

Fe(3+)-binding residues include His-80 and His-82. Residues His-80 and His-82 each coordinate Zn(2+). Residues Arg-89, Tyr-152, and His-187 each coordinate 4-imidazolone-5-propanoate. Tyr-152 contacts N-formimidoyl-L-glutamate. His-252 is a binding site for Fe(3+). His-252 provides a ligand contact to Zn(2+). Glu-255 provides a ligand contact to 4-imidazolone-5-propanoate. Asp-326 is a binding site for Fe(3+). A Zn(2+)-binding site is contributed by Asp-326. 2 residues coordinate N-formimidoyl-L-glutamate: Asn-328 and Gly-330. Residue Ser-331 participates in 4-imidazolone-5-propanoate binding.

This sequence belongs to the metallo-dependent hydrolases superfamily. HutI family. It depends on Zn(2+) as a cofactor. Fe(3+) is required as a cofactor.

It localises to the cytoplasm. The enzyme catalyses 4-imidazolone-5-propanoate + H2O = N-formimidoyl-L-glutamate. It participates in amino-acid degradation; L-histidine degradation into L-glutamate; N-formimidoyl-L-glutamate from L-histidine: step 3/3. Its function is as follows. Catalyzes the hydrolytic cleavage of the carbon-nitrogen bond in imidazolone-5-propanoate to yield N-formimidoyl-L-glutamate. It is the third step in the universal histidine degradation pathway. This chain is Imidazolonepropionase, found in Bacteroides fragilis (strain ATCC 25285 / DSM 2151 / CCUG 4856 / JCM 11019 / LMG 10263 / NCTC 9343 / Onslow / VPI 2553 / EN-2).